The primary structure comprises 66 residues: MAKSKDVRVAVILECTSCVRNGVNKVSTGISRYITQKNRHNTPNPLELKKFCPYCYKHTIHGEIKK.

This sequence belongs to the bacterial ribosomal protein bL33 family.

The protein localises to the plastid. Its subcellular location is the chloroplast. The polypeptide is Large ribosomal subunit protein bL33c (Ipomoea purpurea (Common morning glory)).